A 225-amino-acid polypeptide reads, in one-letter code: 2-C-methyl-D-erythritol 4-phosphate cytidylyltransferase (225 aa).

Belongs to the IspD/TarI cytidylyltransferase family. IspD subfamily.

The catalysed reaction is 2-C-methyl-D-erythritol 4-phosphate + CTP + H(+) = 4-CDP-2-C-methyl-D-erythritol + diphosphate. Its pathway is isoprenoid biosynthesis; isopentenyl diphosphate biosynthesis via DXP pathway; isopentenyl diphosphate from 1-deoxy-D-xylulose 5-phosphate: step 2/6. Its function is as follows. Catalyzes the formation of 4-diphosphocytidyl-2-C-methyl-D-erythritol from CTP and 2-C-methyl-D-erythritol 4-phosphate (MEP). The sequence is that of 2-C-methyl-D-erythritol 4-phosphate cytidylyltransferase from Haemophilus influenzae (strain PittGG).